The following is a 230-amino-acid chain: Large ribosomal subunit protein uL1 (230 aa).

Belongs to the universal ribosomal protein uL1 family. As to quaternary structure, part of the 50S ribosomal subunit.

Binds directly to 23S rRNA. The L1 stalk is quite mobile in the ribosome, and is involved in E site tRNA release. In terms of biological role, protein L1 is also a translational repressor protein, it controls the translation of the L11 operon by binding to its mRNA. The polypeptide is Large ribosomal subunit protein uL1 (Rubrobacter xylanophilus (strain DSM 9941 / JCM 11954 / NBRC 16129 / PRD-1)).